We begin with the raw amino-acid sequence, 546 residues long: 2-isopropylmalate synthase (546 aa).

In terms of domain architecture, Pyruvate carboxyltransferase spans 5–274 (ITIFDTTLRD…TADVHTEHLT (270 aa)). Residues Asp-14, His-209, His-211, and Asn-245 each contribute to the Mn(2+) site. Residues 415 to 546 (RLDQFSVHLS…QNGIMHTYGE (132 aa)) are regulatory domain.

This sequence belongs to the alpha-IPM synthase/homocitrate synthase family. LeuA type 1 subfamily. In terms of assembly, homodimer. The cofactor is Mn(2+).

Its subcellular location is the cytoplasm. The enzyme catalyses 3-methyl-2-oxobutanoate + acetyl-CoA + H2O = (2S)-2-isopropylmalate + CoA + H(+). Its pathway is amino-acid biosynthesis; L-leucine biosynthesis; L-leucine from 3-methyl-2-oxobutanoate: step 1/4. Its function is as follows. Catalyzes the condensation of the acetyl group of acetyl-CoA with 3-methyl-2-oxobutanoate (2-ketoisovalerate) to form 3-carboxy-3-hydroxy-4-methylpentanoate (2-isopropylmalate). This is 2-isopropylmalate synthase from Salinibacter ruber (strain M8).